A 331-amino-acid polypeptide reads, in one-letter code: Probable transcriptional regulatory protein At2g25830 (331 aa).

Belongs to the TACO1 family.

This is Probable transcriptional regulatory protein At2g25830 from Arabidopsis thaliana (Mouse-ear cress).